The primary structure comprises 201 residues: Glycerol-3-phosphate acyltransferase (201 aa).

A run of 6 helical transmembrane segments spans residues 3 to 23 (TVLF…VVVS), 51 to 71 (KAAI…VWLV), 85 to 105 (VALV…FRFV), 116 to 136 (VLLA…LVIA), 137 to 157 (YAFR…PFYY), and 158 to 178 (GLLF…ILLV).

The protein belongs to the PlsY family. As to quaternary structure, probably interacts with PlsX.

The protein localises to the cell inner membrane. The enzyme catalyses an acyl phosphate + sn-glycerol 3-phosphate = a 1-acyl-sn-glycero-3-phosphate + phosphate. It participates in lipid metabolism; phospholipid metabolism. Catalyzes the transfer of an acyl group from acyl-phosphate (acyl-PO(4)) to glycerol-3-phosphate (G3P) to form lysophosphatidic acid (LPA). This enzyme utilizes acyl-phosphate as fatty acyl donor, but not acyl-CoA or acyl-ACP. The polypeptide is Glycerol-3-phosphate acyltransferase (Janthinobacterium sp. (strain Marseille) (Minibacterium massiliensis)).